We begin with the raw amino-acid sequence, 633 residues long: Chaperone protein DnaK (633 aa).

The residue at position 198 (threonine 198) is a Phosphothreonine; by autocatalysis. Residues 599 to 633 (QQASQETPGDGDAGAAGAKKKDDDDVVDADYEEVK) are disordered. Positions 622–633 (DDVVDADYEEVK) are enriched in acidic residues.

Belongs to the heat shock protein 70 family.

Its function is as follows. Acts as a chaperone. The polypeptide is Chaperone protein DnaK (Desulfotalea psychrophila (strain LSv54 / DSM 12343)).